The following is a 592-amino-acid chain: Colicin-A (592 aa).

Gly residues-rich tracts occupy residues 1–13 and 23–34; these read MPGF…GDGT and PEPGGGSHGNSG. Disordered regions lie at residues 1 to 57 and 373 to 395; these read MPGF…PGDS and RQRQ…KAKD. A run of 2 helical transmembrane segments spans residues 528 to 548 and 555 to 575; these read WVLS…TLGA and VPAI…GALI.

Belongs to the channel forming colicin family.

The protein resides in the cell membrane. Functionally, this colicin is a channel-forming colicin. This class of transmembrane toxins depolarize the cytoplasmic membrane, leading to dissipation of cellular energy. Colicins are polypeptide toxins produced by and active against E.coli and closely related bacteria. This Citrobacter freundii protein is Colicin-A (caa).